The chain runs to 422 residues: UDP-N-acetylglucosamine 1-carboxyvinyltransferase (422 aa).

Residue 22-23 coordinates phosphoenolpyruvate; it reads KN. Arg-94 contacts UDP-N-acetyl-alpha-D-glucosamine. Cys-118 acts as the Proton donor in catalysis. 2-(S-cysteinyl)pyruvic acid O-phosphothioketal is present on Cys-118. Residues 123 to 127, Asp-309, and Ile-331 contribute to the UDP-N-acetyl-alpha-D-glucosamine site; that span reads RPVDL.

This sequence belongs to the EPSP synthase family. MurA subfamily.

Its subcellular location is the cytoplasm. The enzyme catalyses phosphoenolpyruvate + UDP-N-acetyl-alpha-D-glucosamine = UDP-N-acetyl-3-O-(1-carboxyvinyl)-alpha-D-glucosamine + phosphate. It functions in the pathway cell wall biogenesis; peptidoglycan biosynthesis. Cell wall formation. Adds enolpyruvyl to UDP-N-acetylglucosamine. The sequence is that of UDP-N-acetylglucosamine 1-carboxyvinyltransferase from Cereibacter sphaeroides (strain ATCC 17023 / DSM 158 / JCM 6121 / CCUG 31486 / LMG 2827 / NBRC 12203 / NCIMB 8253 / ATH 2.4.1.) (Rhodobacter sphaeroides).